A 606-amino-acid chain; its full sequence is Maternal effect protein oskar (606 aa).

The 70-residue stretch at 152–221 folds into the HTH OST-type domain; the sequence is EYPDIDSEVR…SGKRIFNLKA (70 aa). A phosphoserine mark is found at Ser-270 and Ser-275. The interval 425 to 439 is leucine-zipper; sequence LMGDDFMLYLARMEL.

Interacts with smaug (smg). In terms of assembly, interacts with yl/yolkless. As to expression, begins to accumulate at the posterior pole of the oocyte from stage 8 onwards.

It localises to the endosome. In terms of biological role, organizes the germ plasm and directs localization of the posterior determinant nanos. Oskar protein is required to keep nanos (nos) RNA and staufen protein at the posterior pole. The sequence is that of Maternal effect protein oskar (osk) from Drosophila melanogaster (Fruit fly).